The sequence spans 261 residues: Ribosomal RNA small subunit methyltransferase J (261 aa).

Residues 109 to 110, 125 to 126, and aspartate 179 contribute to the S-adenosyl-L-methionine site; these read RD and ER.

Belongs to the methyltransferase superfamily. RsmJ family.

The protein localises to the cytoplasm. It catalyses the reaction guanosine(1516) in 16S rRNA + S-adenosyl-L-methionine = N(2)-methylguanosine(1516) in 16S rRNA + S-adenosyl-L-homocysteine + H(+). Its function is as follows. Specifically methylates the guanosine in position 1516 of 16S rRNA. This Pseudomonas aeruginosa (strain UCBPP-PA14) protein is Ribosomal RNA small subunit methyltransferase J.